Here is a 423-residue protein sequence, read N- to C-terminus: Tegument protein UL43 (423 aa).

Residues 1 to 12 (MEKTPAETTAVS) are compositionally biased toward polar residues. The interval 1–46 (MEKTPAETTAVSAGNVPRDSIPCITNVSADTRGRTRPSRPATVPQR) is disordered.

Belongs to the herpesviridae US22 family.

It localises to the virion tegument. The sequence is that of Tegument protein UL43 (UL43) from Homo sapiens (Human).